We begin with the raw amino-acid sequence, 218 residues long: N-(5'-phosphoribosyl)anthranilate isomerase (218 aa).

This sequence belongs to the TrpF family.

The catalysed reaction is N-(5-phospho-beta-D-ribosyl)anthranilate = 1-(2-carboxyphenylamino)-1-deoxy-D-ribulose 5-phosphate. It participates in amino-acid biosynthesis; L-tryptophan biosynthesis; L-tryptophan from chorismate: step 3/5. This chain is N-(5'-phosphoribosyl)anthranilate isomerase, found in Rhodopseudomonas palustris (strain BisB5).